The following is a 533-amino-acid chain: Probable anion transporter 4, chloroplastic (533 aa).

The next 12 helical transmembrane spans lie at 117 to 137, 152 to 172, 179 to 199, 203 to 223, 243 to 263, 267 to 287, 342 to 362, 376 to 396, 417 to 437, 438 to 458, 474 to 494, and 502 to 522; these read MLAL…VAIV, IVQS…GTLV, VVMA…PWAA, LWAL…ALPC, IAMA…PILM, GIYG…LVWL, VIVA…WMPI, AWFS…AGFW, IGFI…QPLV, ASAW…GFLI, MCLT…GFFV, and GFIL…NIYA.

This sequence belongs to the major facilitator superfamily. Sodium/anion cotransporter (TC 2.A.1.14) family. Expressed in leaf veins and root tips.

It is found in the plastid. Its subcellular location is the chloroplast membrane. Inorganic phosphate and probable anion transporter. The protein is Probable anion transporter 4, chloroplastic (ANTR4) of Arabidopsis thaliana (Mouse-ear cress).